A 378-amino-acid polypeptide reads, in one-letter code: Erythronate-4-phosphate dehydrogenase (378 aa).

Substrate is bound by residues serine 45 and threonine 66. NAD(+) is bound by residues aspartate 146 and threonine 175. Arginine 208 is a catalytic residue. Aspartate 232 serves as a coordination point for NAD(+). Glutamate 237 is an active-site residue. Residue histidine 254 is the Proton donor of the active site. Position 257 (glycine 257) interacts with NAD(+). Position 258 (tyrosine 258) interacts with substrate.

The protein belongs to the D-isomer specific 2-hydroxyacid dehydrogenase family. PdxB subfamily. Homodimer.

Its subcellular location is the cytoplasm. The enzyme catalyses 4-phospho-D-erythronate + NAD(+) = (R)-3-hydroxy-2-oxo-4-phosphooxybutanoate + NADH + H(+). It participates in cofactor biosynthesis; pyridoxine 5'-phosphate biosynthesis; pyridoxine 5'-phosphate from D-erythrose 4-phosphate: step 2/5. Catalyzes the oxidation of erythronate-4-phosphate to 3-hydroxy-2-oxo-4-phosphonooxybutanoate. The polypeptide is Erythronate-4-phosphate dehydrogenase (Escherichia coli O8 (strain IAI1)).